The sequence spans 557 residues: Putative glutathione-regulated potassium-efflux system protein KefB (557 aa).

Transmembrane regions (helical) follow at residues 2–22 (LGYL…ISDV), 24–44 (EILH…GLEL), 56–76 (IFGV…GLLM), 84–104 (AAVV…LQLM), 121–141 (VLLF…LLAG), 146–166 (HFDW…LIGG), 176–196 (FIAA…LVLG), 199–219 (LFMD…GVLL), 237–257 (GLLL…GVLY), and 260–280 (LLWV…VLYL). In terms of domain architecture, RCK N-terminal spans 356 to 475 (KPQVIVVGFG…AGVTQFSRET (120 aa)).

Belongs to the monovalent cation:proton antiporter 2 (CPA2) transporter (TC 2.A.37) family. KefB subfamily. As to quaternary structure, interacts with the regulatory subunit KefG.

It is found in the cell inner membrane. Pore-forming subunit of a potassium efflux system that confers protection against electrophiles. Catalyzes K(+)/H(+) antiport. The protein is Putative glutathione-regulated potassium-efflux system protein KefB of Shigella flexneri.